The chain runs to 156 residues: Small ribosomal subunit protein uS7 (156 aa).

It belongs to the universal ribosomal protein uS7 family. As to quaternary structure, part of the 30S ribosomal subunit. Contacts proteins S9 and S11.

Functionally, one of the primary rRNA binding proteins, it binds directly to 16S rRNA where it nucleates assembly of the head domain of the 30S subunit. Is located at the subunit interface close to the decoding center, probably blocks exit of the E-site tRNA. This is Small ribosomal subunit protein uS7 from Paramagnetospirillum magneticum (strain ATCC 700264 / AMB-1) (Magnetospirillum magneticum).